A 392-amino-acid chain; its full sequence is Phosphoglycerate kinase (392 aa).

Substrate is bound by residues 21-23 (DFN), R36, 59-62 (HLGR), R113, and R146. ATP is bound by residues K197, E319, and 345-348 (GGDT).

Belongs to the phosphoglycerate kinase family. As to quaternary structure, monomer.

Its subcellular location is the cytoplasm. The catalysed reaction is (2R)-3-phosphoglycerate + ATP = (2R)-3-phospho-glyceroyl phosphate + ADP. It functions in the pathway carbohydrate degradation; glycolysis; pyruvate from D-glyceraldehyde 3-phosphate: step 2/5. This Francisella tularensis subsp. tularensis (strain FSC 198) protein is Phosphoglycerate kinase.